A 96-amino-acid polypeptide reads, in one-letter code: HIG1 domain family member 1C (96 aa).

Residues 1-26 (MSSDEWSAAEDEGQLSRLLRKSRDSP) are Cytoplasmic-facing. Residues 1 to 91 (MSSDEWSAAE…YKDYIRPRFF (91 aa)) form the HIG1 domain. Residues 27-44 (FVPVGMAGFVAVLSYGLY) form a helical membrane-spanning segment. Topologically, residues 45–58 (KLNSRREQKMSLHL) are extracellular. Residues 59-81 (IHVRVAAQGCVVGAVTLGVLYSM) form a helical membrane-spanning segment. Residues 82–96 (YKDYIRPRFFNVPKK) are Cytoplasmic-facing.

The protein resides in the membrane. The polypeptide is HIG1 domain family member 1C (Higd1c) (Mus musculus (Mouse)).